A 474-amino-acid polypeptide reads, in one-letter code: 2-succinylbenzoate--CoA ligase (474 aa).

Belongs to the ATP-dependent AMP-binding enzyme family. MenE subfamily.

The catalysed reaction is 2-succinylbenzoate + ATP + CoA = 2-succinylbenzoyl-CoA + AMP + diphosphate. Its pathway is quinol/quinone metabolism; 1,4-dihydroxy-2-naphthoate biosynthesis; 1,4-dihydroxy-2-naphthoate from chorismate: step 5/7. It functions in the pathway quinol/quinone metabolism; menaquinone biosynthesis. Converts 2-succinylbenzoate (OSB) to 2-succinylbenzoyl-CoA (OSB-CoA). The protein is 2-succinylbenzoate--CoA ligase of Staphylococcus epidermidis (strain ATCC 12228 / FDA PCI 1200).